The primary structure comprises 67 residues: MDWNRVEGNWKQVKGKVKEQWGKLTDDDLDRIAGKRDQLEGKIQERYGIERDRARRDIDDWYNRQGW.

The protein belongs to the UPF0337 (CsbD) family.

The sequence is that of UPF0337 protein msl9551 from Mesorhizobium japonicum (strain LMG 29417 / CECT 9101 / MAFF 303099) (Mesorhizobium loti (strain MAFF 303099)).